The following is a 483-amino-acid chain: uncharacterized protein (483 aa).

Residues 11-71 (RYRKGDIIEL…SRYLEARAIE (61 aa)) form the TRAM domain. The [4Fe-4S] cluster site is built by Cys84, Cys90, Cys93, and Cys187. Residues Gln312, Tyr341, Glu362, and Asp412 each coordinate S-adenosyl-L-methionine. Cys439 functions as the Nucleophile in the catalytic mechanism.

This sequence belongs to the class I-like SAM-binding methyltransferase superfamily. RNA M5U methyltransferase family.

This is an uncharacterized protein from Chlorobaculum tepidum (strain ATCC 49652 / DSM 12025 / NBRC 103806 / TLS) (Chlorobium tepidum).